The chain runs to 265 residues: Biogenesis of lysosome-related organelles complex 1 subunit KXD1 (265 aa).

Disordered regions lie at residues M1–V63 and D79–A111. Positions Q14–Y27 are enriched in polar residues. Positions D52 to V63 are enriched in acidic residues. Residues H102–A111 show a composition bias toward polar residues. The stretch at E196–T245 forms a coiled coil.

Belongs to the KXD1 family. In terms of assembly, component of the biogenesis of lysosome-related organelles complex-1 (BLOC-1).

The protein resides in the endosome. Its function is as follows. Component of the biogenesis of lysosome-related organelles complex-1 (BLOC-1) involved in endosomal cargo sorting. This chain is Biogenesis of lysosome-related organelles complex 1 subunit KXD1 (KXD1), found in Vanderwaltozyma polyspora (strain ATCC 22028 / DSM 70294 / BCRC 21397 / CBS 2163 / NBRC 10782 / NRRL Y-8283 / UCD 57-17) (Kluyveromyces polysporus).